A 386-amino-acid polypeptide reads, in one-letter code: Probable family 17 glucosidase SCW4 (386 aa).

An N-terminal signal peptide occupies residues 1–19 (MRLSNLIASASLLSAATLA). Residues 20–30 (APANHEHKDKR) constitute a propeptide that is removed on maturation. Residues 88–127 (ENNSQVSAAASPASSSAATSTQSSSSSQASSSSSSGEDVS) form a disordered region. Asn-89 is a glycosylation site (N-linked (GlcNAc...) asparagine). Glu-323 functions as the Nucleophile in the catalytic mechanism.

This sequence belongs to the glycosyl hydrolase 17 family. N-glycosylated.

It is found in the secreted. Its subcellular location is the cell wall. Its function is as follows. Glucanases possibly play a role in cell expansion during growth, in cell-cell fusion during mating, and in spore release during sporulation. In Saccharomyces cerevisiae (strain ATCC 204508 / S288c) (Baker's yeast), this protein is Probable family 17 glucosidase SCW4 (SCW4).